The following is a 354-amino-acid chain: Uroporphyrinogen decarboxylase (354 aa).

Substrate is bound by residues 27–31 (RQAGR), D77, Y153, T208, and H326.

The protein belongs to the uroporphyrinogen decarboxylase family. In terms of assembly, homodimer.

It is found in the cytoplasm. It catalyses the reaction uroporphyrinogen III + 4 H(+) = coproporphyrinogen III + 4 CO2. The protein operates within porphyrin-containing compound metabolism; protoporphyrin-IX biosynthesis; coproporphyrinogen-III from 5-aminolevulinate: step 4/4. In terms of biological role, catalyzes the decarboxylation of four acetate groups of uroporphyrinogen-III to yield coproporphyrinogen-III. This Neisseria meningitidis serogroup C / serotype 2a (strain ATCC 700532 / DSM 15464 / FAM18) protein is Uroporphyrinogen decarboxylase.